Here is a 232-residue protein sequence, read N- to C-terminus: Cysteine proteinase inhibitor 7 (232 aa).

A signal peptide spans 1-29; that stretch reads MDMRRASMCMMLICVSLVLLSGFGQFVIC. Cystatin domains lie at 46–135 and 152–214; these read GGFS…KNII and FDWR…ERGN. Residues 91–95 carry the Secondary area of contact motif; it reads QVVAG. Ser-181 is subject to Phosphoserine.

It belongs to the cystatin family. Phytocystatin subfamily.

It localises to the secreted. Its function is as follows. Specific inhibitor of cysteine proteinases. Probably involved in the regulation of endogenous processes and in defense against pests and pathogens. The chain is Cysteine proteinase inhibitor 7 (CYS7) from Arabidopsis thaliana (Mouse-ear cress).